Consider the following 976-residue polypeptide: Ephrin type-A receptor 1 (976 aa).

The first 25 residues, 1–25 (MERRWPLGLGLVLLLCAPLPPGARA), serve as a signal peptide directing secretion. Residues 26–547 (KEVTLMDTSK…PVSRGLTGGE (522 aa)) are Extracellular-facing. The 183-residue stretch at 27–209 (EVTLMDTSKA…FYQRCPETLN (183 aa)) folds into the Eph LBD domain. Fibronectin type-III domains lie at 332–445 (PPSA…MGHA) and 447–538 (SLSG…TSPP). A glycan (N-linked (GlcNAc...) asparagine) is linked at Asn414. A helical transmembrane segment spans residues 548 to 568 (IVAVIFGLLLGAALLLGILVF). Residues 569–976 (RSRRAQRQRQ…ILCSIQGFKD (408 aa)) lie on the Cytoplasmic side of the membrane. 2 positions are modified to phosphotyrosine; by autocatalysis: Tyr599 and Tyr605. The region spanning 624–884 (LMVDTVIGEG…KLQAHLEQLL (261 aa)) is the Protein kinase domain. ATP contacts are provided by residues 630 to 638 (IGEGEFGEV) and Lys656. Asp749 serves as the catalytic Proton acceptor. Tyr781 carries the post-translational modification Phosphotyrosine; by autocatalysis. Phosphoserine occurs at positions 906 and 910. An SAM domain is found at 913 to 976 (IPYRTVSEWL…ILCSIQGFKD (64 aa)). Position 930 is a phosphotyrosine; by autocatalysis (Tyr930). A PDZ-binding motif is present at residues 974–976 (FKD).

The protein belongs to the protein kinase superfamily. Tyr protein kinase family. Ephrin receptor subfamily. As to quaternary structure, homodimer. Forms a signaling complex with LCK; PTK2B/PYK2 and PI3-kinase upon activation by EFNA1; regulates T-lymphocytes migration. Interacts (via SAM domain) with ILK (via ANK repeats); stimulated by EFNA1 but independent of the kinase activity of EPHA1. Interacts (kinase activity-dependent) with PTK2/FAK1. Post-translationally, phosphorylated. Autophosphorylation is stimulated by its ligand EFNA1. Ubiquitinated. In terms of tissue distribution, overexpressed in several carcinomas.

Its subcellular location is the cell membrane. The catalysed reaction is L-tyrosyl-[protein] + ATP = O-phospho-L-tyrosyl-[protein] + ADP + H(+). Functionally, receptor tyrosine kinase which binds promiscuously membrane-bound ephrin-A family ligands residing on adjacent cells, leading to contact-dependent bidirectional signaling into neighboring cells. The signaling pathway downstream of the receptor is referred to as forward signaling while the signaling pathway downstream of the ephrin ligand is referred to as reverse signaling. Binds with a low affinity EFNA3 and EFNA4 and with a high affinity to EFNA1 which most probably constitutes its cognate/functional ligand. Upon activation by EFNA1 induces cell attachment to the extracellular matrix inhibiting cell spreading and motility through regulation of ILK and downstream RHOA and RAC. Also plays a role in angiogenesis and regulates cell proliferation. May play a role in apoptosis. This chain is Ephrin type-A receptor 1 (EPHA1), found in Homo sapiens (Human).